The chain runs to 145 residues: Ribosome-binding factor A (145 aa).

Residues 126–145 are disordered; the sequence is RDLDTETDAEAGSETTKEED. Acidic residues predominate over residues 130–145; the sequence is TETDAEAGSETTKEED.

This sequence belongs to the RbfA family. Monomer. Binds 30S ribosomal subunits, but not 50S ribosomal subunits or 70S ribosomes.

It localises to the cytoplasm. One of several proteins that assist in the late maturation steps of the functional core of the 30S ribosomal subunit. Associates with free 30S ribosomal subunits (but not with 30S subunits that are part of 70S ribosomes or polysomes). Required for efficient processing of 16S rRNA. May interact with the 5'-terminal helix region of 16S rRNA. The protein is Ribosome-binding factor A of Azorhizobium caulinodans (strain ATCC 43989 / DSM 5975 / JCM 20966 / LMG 6465 / NBRC 14845 / NCIMB 13405 / ORS 571).